A 242-amino-acid polypeptide reads, in one-letter code: MNYLGDYCDVYLTHDSMSVRKAHNSGRNHLRNVVEYYQEIGHEKAQSVIDSITNSYAAEGQASSNPMLQQPGAPGAYPPPAFGFPGRPGMLPPPPPFGMPGAPPGAPPGGMIPLPGGRGMPPFPPPPPFGGTSGGPPMPGDLPPPPLPNMPSGNIPFPPPNGFPPNFQFPPPGAAGFPPPPIPGQGQTQSTSPGPGATGTPVPPPGFPLPGAPPLGQSAGITPPPGVPQKPASSPGPSQEGK.

The Matrin-type; degenerate zinc-finger motif lies at 3 to 35 (YLGDYCDVYLTHDSMSVRKAHNSGRNHLRNVVE). Positions 60-242 (GQASSNPMLQ…SSPGPSQEGK (183 aa)) are disordered. 4 stretches are compositionally biased toward pro residues: residues 90–107 (MLPPPPPFGMPGAPPGAP), 136–149 (PPMPGDLPPPPLPN), 156–183 (PFPPPNGFPPNFQFPPPGAAGFPPPPIP), and 201–213 (PVPPPGFPLPGAP). The segment covering 231 to 242 (PASSPGPSQEGK) has biased composition (polar residues).

Belongs to the U1 small nuclear ribonucleoprotein C family. In terms of assembly, U1 snRNP is composed of the 7 core Sm proteins B/B', D1, D2, D3, E, F and G that assemble in a heptameric protein ring on the Sm site of the small nuclear RNA to form the core snRNP, and at least 3 U1 snRNP-specific proteins U1-70K, U1-A and U1-C. U1-C interacts with U1 snRNA and the 5' splice-site region of the pre-mRNA.

It localises to the nucleus. Component of the spliceosomal U1 snRNP, which is essential for recognition of the pre-mRNA 5' splice-site and the subsequent assembly of the spliceosome. U1-C is directly involved in initial 5' splice-site recognition for both constitutive and regulated alternative splicing. The interaction with the 5' splice-site seems to precede base-pairing between the pre-mRNA and the U1 snRNA. Stimulates commitment or early (E) complex formation by stabilizing the base pairing of the 5' end of the U1 snRNA and the 5' splice-site region. The chain is U1 small nuclear ribonucleoprotein C from Ajellomyces capsulatus (strain G186AR / H82 / ATCC MYA-2454 / RMSCC 2432) (Darling's disease fungus).